Here is a 297-residue protein sequence, read N- to C-terminus: tRNA dimethylallyltransferase (297 aa).

15–22 (GPTASGKS) lines the ATP pocket. 17 to 22 (TASGKS) serves as a coordination point for substrate. Interaction with substrate tRNA stretches follow at residues 40-43 (DSMQ) and 164-168 (QRIVR).

Belongs to the IPP transferase family. As to quaternary structure, monomer. It depends on Mg(2+) as a cofactor.

The catalysed reaction is adenosine(37) in tRNA + dimethylallyl diphosphate = N(6)-dimethylallyladenosine(37) in tRNA + diphosphate. In terms of biological role, catalyzes the transfer of a dimethylallyl group onto the adenine at position 37 in tRNAs that read codons beginning with uridine, leading to the formation of N6-(dimethylallyl)adenosine (i(6)A). The chain is tRNA dimethylallyltransferase from Rhizobium leguminosarum bv. trifolii (strain WSM2304).